A 20-amino-acid chain; its full sequence is L-amino-acid oxidase L2 (20 aa).

It belongs to the flavin monoamine oxidase family. FIG1 subfamily. In terms of assembly, monomer. This is in contrast with most of its orthologs, that are non-covalently linked homodimers. It depends on FAD as a cofactor. In terms of processing, N-glycosylated. In terms of tissue distribution, expressed by the venom gland.

The protein resides in the secreted. The catalysed reaction is an L-alpha-amino acid + O2 + H2O = a 2-oxocarboxylate + H2O2 + NH4(+). It catalyses the reaction L-leucine + O2 + H2O = 4-methyl-2-oxopentanoate + H2O2 + NH4(+). The enzyme catalyses L-phenylalanine + O2 + H2O = 3-phenylpyruvate + H2O2 + NH4(+). It carries out the reaction L-tryptophan + O2 + H2O = indole-3-pyruvate + H2O2 + NH4(+). The catalysed reaction is L-methionine + O2 + H2O = 4-methylsulfanyl-2-oxobutanoate + H2O2 + NH4(+). It catalyses the reaction L-isoleucine + O2 + H2O = (S)-3-methyl-2-oxopentanoate + H2O2 + NH4(+). The enzyme catalyses L-tyrosine + O2 + H2O = 3-(4-hydroxyphenyl)pyruvate + H2O2 + NH4(+). In terms of biological role, catalyzes an oxidative deamination of predominantly hydrophobic and aromatic L-amino acids, thus producing hydrogen peroxide that may contribute to the diverse toxic effects of this enzyme. Is active on L-Ile, L-Leu, L-Met, L-Phe, L-Trp, and L-Tyr. Exhibits diverse biological activities, such as hemorrhage, hemolysis, edema, apoptosis of vascular endothelial cells or tumor cell lines, antibacterial and antiparasitic activities, as well as regulation of platelet aggregation. Its effect on platelets is controversial, since it either induces aggregation or inhibits agonist-induced aggregation. These different effects are probably due to different experimental conditions. The chain is L-amino-acid oxidase L2 from Daboia russelii (Russel's viper).